The sequence spans 398 residues: Probable peptidoglycan glycosyltransferase FtsW (398 aa).

The Cytoplasmic portion of the chain corresponds to 1-20 (MSTQAIRGARGLVLKWGAGR). The helical transmembrane segment at 21–41 (FYLDTVLLSVSLGLMLFGFVM) threads the bilayer. The Periplasmic segment spans residues 42 to 57 (VSSASLHLGEKMASDS). The helical transmembrane segment at 58–78 (FYFPKHQLVHILLGLAAGWGA) threads the bilayer. Topologically, residues 79 to 92 (ARVRLDTLERHSRS) are cytoplasmic. Residues 93 to 113 (LFWAGIALLVLVLIPGVGKSV) form a helical membrane-spanning segment. The Periplasmic portion of the chain corresponds to 114–121 (NGSVRWIN). Residues 122–142 (LFGLRVQVSEVFKLVAAIYVA) form a helical membrane-spanning segment. Over 143–153 (GYISRHLDTVR) the chain is Cytoplasmic. Residues 154 to 174 (TSVKGMIFPLSLLAIGAVLLL) traverse the membrane as a helical segment. At 175–177 (KEP) the chain is on the periplasmic side. A helical transmembrane segment spans residues 178–198 (DFGATAVVMATALGMLFLAGA). Position 199 (Arg-199) is a topological domain, cytoplasmic. A helical transmembrane segment spans residues 200 to 220 (LWVFVGLLGLVAVAGTVLIYT). At 221–289 (AEYRLRRVLS…LFSVIGEELG (69 aa)) the chain is on the periplasmic side. Residues 290 to 310 (LWGATTVILLFAIVVWRALAI) form a helical membrane-spanning segment. Residues 311 to 318 (GRLAERSG) are Cytoplasmic-facing. The helical transmembrane segment at 319 to 339 (NLFAAFLAYGIGIWLGLQSFI) threads the bilayer. The Periplasmic portion of the chain corresponds to 340–355 (NMGVNMGMLPTKGLTL). The chain crosses the membrane as a helical span at residues 356–376 (PLMSYGGGSMMVVCAAIGLLF). The Cytoplasmic segment spans residues 377 to 398 (RIRSEAVASFLGNGRKGLWPGV).

Belongs to the SEDS family. FtsW subfamily.

The protein localises to the cell inner membrane. The catalysed reaction is [GlcNAc-(1-&gt;4)-Mur2Ac(oyl-L-Ala-gamma-D-Glu-L-Lys-D-Ala-D-Ala)](n)-di-trans,octa-cis-undecaprenyl diphosphate + beta-D-GlcNAc-(1-&gt;4)-Mur2Ac(oyl-L-Ala-gamma-D-Glu-L-Lys-D-Ala-D-Ala)-di-trans,octa-cis-undecaprenyl diphosphate = [GlcNAc-(1-&gt;4)-Mur2Ac(oyl-L-Ala-gamma-D-Glu-L-Lys-D-Ala-D-Ala)](n+1)-di-trans,octa-cis-undecaprenyl diphosphate + di-trans,octa-cis-undecaprenyl diphosphate + H(+). The protein operates within cell wall biogenesis; peptidoglycan biosynthesis. Peptidoglycan polymerase that is essential for cell division. The chain is Probable peptidoglycan glycosyltransferase FtsW from Methylococcus capsulatus (strain ATCC 33009 / NCIMB 11132 / Bath).